A 968-amino-acid chain; its full sequence is RNA polymerase-associated protein RapA (968 aa).

Residues 164 to 334 enclose the Helicase ATP-binding domain; the sequence is EVGQRHAPRV…FARLRLLDPN (171 aa). Position 177–184 (177–184) interacts with ATP; that stretch reads DEVGLGKT. Residues 280–283 carry the DEAH box motif; sequence DEAH. The 152-residue stretch at 493 to 644 folds into the Helicase C-terminal domain; sequence WLVDFLLDLR…TCPTGRALYD (152 aa).

Belongs to the SNF2/RAD54 helicase family. RapA subfamily. In terms of assembly, interacts with the RNAP. Has a higher affinity for the core RNAP than for the holoenzyme. Its ATPase activity is stimulated by binding to RNAP.

In terms of biological role, transcription regulator that activates transcription by stimulating RNA polymerase (RNAP) recycling in case of stress conditions such as supercoiled DNA or high salt concentrations. Probably acts by releasing the RNAP, when it is trapped or immobilized on tightly supercoiled DNA. Does not activate transcription on linear DNA. Probably not involved in DNA repair. This Sodalis glossinidius (strain morsitans) protein is RNA polymerase-associated protein RapA.